The primary structure comprises 804 residues: MDFSHKAIEKKWQKYWKENNVYKTTDSNHKKAYVLDMFPYPSGAGLHVGHIKGYTATDVYSRFKRMQGYDVLHPIGWDAFGLPAEQYALKTGNDPRDFTLKNIENFKAQLVKMGFSYDYDKEINTADPNYYKVTQWIFKELYKKGLAENRNIDVNWCQELGTVLANDEIIEKDGLMVSERGEYPVVKKKMRQWVLKITDYADKLLKGLDNLDWPNSVKELQRNWIGKSEGCEINFKSNDINIPVFTTRADTVFGATYIVLAPENELVLKLTTPNKLDEVKKYIELTANKSEIERKDESKTKTGVFIGSYAINPLTKEQIQIWISDYVLNDYGSGAIMAVPAHDKRDWDFATKFNLPIRFVISTKDESKAFVGEGKHINSEFLNDLDRIQSLQVIHDYIEKNNLGKKKTNYKLRDWLFSRQRFYGEPFPVLYDKDNNIILVEDDDLPITLPKTDYIKPTNTGESPLANVKNWVNVKIGDREYKRETNTMPQSAGSSWYFIAYILANSKNNLIDLTSDEAKKRLEKWLPVDLYIGGQEHAVGHLLYSRFWTHFLYDLGLLPTSEPFQRLFNQGMILGPDNRKMSKSWGNVINPDDVIDTHGADALRLYEMFMGPLDASLPWSFDGLDASLKWLNRCYRMINKIEFSNTNNHKLDYVYNDVVKKVTQMITELKFNTAISQLMVLVNAIYKEELSTVYKPYIEGFVKMLSLFSPHLAEELWEKLGNNSSVTLQAWPEFDETKIVKNTVVIALQVNGKLRSTIEVEKGTDKETLIKLAQENENIIRFIKGHKNLKYIAVVDRIVNIVIE.

The 'HIGH' region signature appears at 39–50 (PYPSGAGLHVGH). A 'KMSKS' region motif is present at residues 580 to 584 (KMSKS). Lysine 583 serves as a coordination point for ATP.

Belongs to the class-I aminoacyl-tRNA synthetase family.

It localises to the cytoplasm. The catalysed reaction is tRNA(Leu) + L-leucine + ATP = L-leucyl-tRNA(Leu) + AMP + diphosphate. This Mycoplasma capricolum subsp. capricolum (strain California kid / ATCC 27343 / NCTC 10154) protein is Leucine--tRNA ligase.